Reading from the N-terminus, the 832-residue chain is G-type lectin S-receptor-like serine/threonine-protein kinase RLK1 (832 aa).

The N-terminal stretch at 1–24 (MGSLSCSIIHLVLILQLQTFFVFS) is a signal peptide. Residues 25–461 (QNIRNGSVPV…VPVTGNRAKK (437 aa)) are Extracellular-facing. Asparagine 29, asparagine 92, asparagine 100, asparagine 178, asparagine 240, and asparagine 251 each carry an N-linked (GlcNAc...) asparagine glycan. Positions 37–157 (SLTASESQQI…GSEDSDEVLW (121 aa)) constitute a Bulb-type lectin domain. The EGF-like; atypical domain occupies 299–349 (RDNMCSPDDALGNMACGYNNICSLGNNKRPKCECPERFVLKDPSNEYGDCL). Intrachain disulfides connect cysteine 303–cysteine 320, cysteine 314–cysteine 330, and cysteine 332–cysteine 348. Positions 357–446 (CRPENQTANS…DSDTFIKVRN (90 aa)) constitute a PAN domain. An N-linked (GlcNAc...) asparagine glycan is attached at asparagine 361. Intrachain disulfides connect cysteine 397-cysteine 420 and cysteine 401-cysteine 407. Asparagine 446 carries N-linked (GlcNAc...) asparagine glycosylation. A helical membrane pass occupies residues 462 to 482 (LDWLIIACSVLLGTSAFVIFD). At 483–832 (TSCSYRKTKK…SLSSDPVSLV (350 aa)) the chain is on the cytoplasmic side. Positions 531–803 (RDFTEELGRG…NVTQMLEGVI (273 aa)) constitute a Protein kinase domain. Residues 537–545 (LGRGAFGIV) and lysine 563 contribute to the ATP site. Positions 622-638 (RRPRPSWEDRKNIAVAI) are caM-binding. Aspartate 657 (proton acceptor) is an active-site residue.

The protein belongs to the protein kinase superfamily. Ser/Thr protein kinase family.

It localises to the cell membrane. It catalyses the reaction L-seryl-[protein] + ATP = O-phospho-L-seryl-[protein] + ADP + H(+). The enzyme catalyses L-threonyl-[protein] + ATP = O-phospho-L-threonyl-[protein] + ADP + H(+). The polypeptide is G-type lectin S-receptor-like serine/threonine-protein kinase RLK1 (RLK1) (Arabidopsis thaliana (Mouse-ear cress)).